Consider the following 1166-residue polypeptide: Serine/threonine-protein kinase BRI1-like 1 (1166 aa).

The N-terminal stretch at 1–21 (MKQRWLLVLILCFFTTSLVMG) is a signal peptide. Residues 22–776 (IHGKHLINDD…IHAKKQTVAT (755 aa)) lie on the Extracellular side of the membrane. Residue Asn33 is glycosylated (N-linked (GlcNAc...) asparagine). Positions 66-73 (CSWRGVSC) match the Cys pair 1 motif. 20 LRR repeats span residues 78 to 99 (RIVGLDLRNSGLTGTLNLVNLT), 103 to 124 (NLQNLYLQGNYFSSGGDSSGSD), 126 to 147 (YLQVLDLSSNSISDYSMVDYVF), 152 to 173 (NLVSVNISNNKLVGKLGFAPSS), 176 to 197 (SLTTVDLSYNILSDKIPESFIS), 202 to 224 (SLKYLDLTHNNLSGDFSDLSFGI), 227 to 248 (NLTFFSLSQNNLSGDKFPITLP), 252 to 274 (FLETLNISRNNLAGKIPNGEYWG), 278 to 300 (NLKQLSLAHNRLSGEIPPELSLL), 303 to 325 (TLVILDLSGNTFSGELPSQFTAC), 327 to 349 (WLQNLNLGNNYLSGDFLNTVVSK), 352 to 375 (GITYLYVAYNNISGSVPISLTNCS), 376 to 397 (NLRVLDLSSNGFTGNVPSGFCS), 403 to 424 (VLEKILIANNYLSGTVPMELGK), 427 to 449 (SLKTIDLSFNELTGPIPKEIWML), 451 to 473 (NLSDLVMWANNLTGTIPEGVCVK), 476 to 498 (NLETLILNNNLLTGSIPESISRC), 500 to 522 (NMIWISLSSNRLTGKIPSGIGNL), 524 to 547 (KLAILQLGNNSLSGNVPRQLGNCK), and 548 to 570 (SLIWLDLNSNNLTGDLPGELASQ). Residue Asn97 is glycosylated (N-linked (GlcNAc...) asparagine). Asn157 is a glycosylation site (N-linked (GlcNAc...) asparagine). N-linked (GlcNAc...) asparagine glycans are attached at residues Asn212, Asn227, Asn237, and Asn257. Asn362 and Asn373 each carry an N-linked (GlcNAc...) asparagine glycan. 2 N-linked (GlcNAc...) asparagine glycosylation sites follow: Asn451 and Asn461. N-linked (GlcNAc...) asparagine glycosylation is found at Asn521, Asn532, Asn558, and Asn638. LRR repeat units lie at residues 664 to 686 (YLQVLNLGHNRITGTIPDSFGGL), 688 to 710 (AIGVLDLSHNNLQGYLPGSLGSL), and 712 to 734 (FLSDLDVSNNNLTGPIPFGGQLT). 2 N-linked (GlcNAc...) asparagine glycosylation sites follow: Asn722 and Asn743. The Cys pair 2 motif lies at 748–755 (CGVPLRPC). The chain crosses the membrane as a helical span at residues 777–797 (AVIAGIAFSFMCFVMLVMALY). The Cytoplasmic segment spans residues 798-1166 (RVRKVQKKEQ…LVEESRDKEP (369 aa)). Phosphothreonine occurs at positions 848 and 856. Residues 859–1147 (FSAETMVGSG…KADTEEDESL (289 aa)) enclose the Protein kinase domain. ATP-binding positions include 865–873 (VGSGGFGEV) and Lys887. Tyr932 is subject to Phosphotyrosine. The Proton acceptor role is filled by Asp987. Position 1022 is a phosphoserine (Ser1022). At Tyr1030 the chain carries Phosphotyrosine. Thr1141 is subject to Phosphothreonine. The segment at 1142-1166 (EEDESLDEFSLKETPLVEESRDKEP) is disordered.

This sequence belongs to the protein kinase superfamily. Ser/Thr protein kinase family. In terms of tissue distribution, predominantly expressed in vascular tissues. From 7 day old seedlings, it is expressed in the columella cells of the root tip, in the vascular initials in the meristematic region of the root and in vascular tissues. After germination, it is expressed in the stele cell and in the early differentiation zone of the root, where the expression continues from the root to the hypocotyls and cotyledons following the midvein. In mature plants, it is expressed in the vasculature of the leaf, predominantly in the midvein, and in the vascular bundles of inflorescence stems. Localizes to procambial cells of the vascular bundles located between the differentiating xylem and the phloem.

It localises to the cell membrane. The catalysed reaction is L-seryl-[protein] + ATP = O-phospho-L-seryl-[protein] + ADP + H(+). The enzyme catalyses L-threonyl-[protein] + ATP = O-phospho-L-threonyl-[protein] + ADP + H(+). Functionally, receptor with a serine/threonine-protein kinase activity. Regulates, in response to brassinosteroid binding, a signaling cascade involved in plant development. Binds brassinolide. May be involved in cell growth and vascular differentiation. This Arabidopsis thaliana (Mouse-ear cress) protein is Serine/threonine-protein kinase BRI1-like 1 (BRL1).